We begin with the raw amino-acid sequence, 127 residues long: Protein ApaG (127 aa).

Positions 3–127 constitute an ApaG domain; that stretch reads NNPSSKIEVA…FVLSVPRTLH (125 aa).

This Xylella fastidiosa (strain M23) protein is Protein ApaG.